The primary structure comprises 276 residues: Omega-amidase NIT2 (276 aa).

Positions Phe-4–Leu-248 constitute a CN hydrolase domain. Phosphoserine is present on Ser-26. Glu-43 (proton acceptor) is an active-site residue. At Lys-68 the chain carries N6-acetyllysine; alternate. Residue Lys-68 is modified to N6-succinyllysine; alternate. Lys-112 serves as the catalytic Proton donor. 2 positions are modified to N6-succinyllysine: Lys-123 and Lys-130. Catalysis depends on Cys-153, which acts as the Nucleophile.

Belongs to the carbon-nitrogen hydrolase superfamily. NIT1/NIT2 family. As to quaternary structure, homodimer.

It is found in the cytoplasm. The catalysed reaction is a monoamide of a dicarboxylate + H2O = a dicarboxylate + NH4(+). The enzyme catalyses 2-oxoglutaramate + H2O = 2-oxoglutarate + NH4(+). It catalyses the reaction 2-oxosuccinamate + H2O = oxaloacetate + NH4(+). Functionally, has omega-amidase activity. The role of omega-amidase is to remove potentially toxic intermediates by converting 2-oxoglutaramate and 2-oxosuccinamate to biologically useful 2-oxoglutarate and oxaloacetate, respectively. Can also hydrolyze gamma-monomethyl-alpha-ketoglutarate in vitro. This is Omega-amidase NIT2 from Mus musculus (Mouse).